The primary structure comprises 605 residues: Putative glutaminase 2 (605 aa).

Substrate is bound by residues S213, N262, E308, N315, Y342, Y394, and V412. ANK repeat units lie at residues 480–509 (DRLIPVFHVARAGDLPTMRRLYMQGEDLNT) and 513–543 (DDRTVLHIAATEGYETMIKFLVNVAKVDVDK). Over residues 569–581 (KAMKRPEQHRKDS) the composition is skewed to basic and acidic residues. The interval 569–605 (KAMKRPEQHRKDSVSSLDTDDEIDDDGFPEKPSFTID) is disordered. Positions 586-595 (DTDDEIDDDG) are enriched in acidic residues.

Belongs to the glutaminase family.

It carries out the reaction L-glutamine + H2O = L-glutamate + NH4(+). This Caenorhabditis elegans protein is Putative glutaminase 2 (glna-2).